The sequence spans 311 residues: MLKSFSMDFAFFEGKIVPVEEAKISIMTNSFHYGTAIFEGIRAYWNEEEEQLYILFAKEHYERLLTNARCLFMELNYSAEELVEITKEILRKSEIREDVYIRPIAYFKDLKLTPKLIDYTPEIAIYLYRFGRYLDTSKGIRAKVSSWRRNDDNSIPSRWKVAGAYVNSALAKTEALMSGYDEAILLNSQGYVAEGSGENIFIIKNGKAITPSPNEHILEGITRNAVITLLKKELVVEVEERPIARSELYTADEVFLTGTAAEVTPVVEIDNRKIGNGEIGPITKQLQEFYFNAVRGKIQRYKKWLTPVYDK.

Position 160 is an N6-(pyridoxal phosphate)lysine (Lys-160).

This sequence belongs to the class-IV pyridoxal-phosphate-dependent aminotransferase family. Requires pyridoxal 5'-phosphate as cofactor.

The catalysed reaction is L-leucine + 2-oxoglutarate = 4-methyl-2-oxopentanoate + L-glutamate. It carries out the reaction L-isoleucine + 2-oxoglutarate = (S)-3-methyl-2-oxopentanoate + L-glutamate. It catalyses the reaction L-valine + 2-oxoglutarate = 3-methyl-2-oxobutanoate + L-glutamate. It participates in amino-acid biosynthesis; L-isoleucine biosynthesis; L-isoleucine from 2-oxobutanoate: step 4/4. Its pathway is amino-acid biosynthesis; L-leucine biosynthesis; L-leucine from 3-methyl-2-oxobutanoate: step 4/4. The protein operates within amino-acid biosynthesis; L-valine biosynthesis; L-valine from pyruvate: step 4/4. In terms of biological role, acts on leucine, isoleucine and valine. This chain is Probable branched-chain-amino-acid aminotransferase (ilvE), found in Aquifex aeolicus (strain VF5).